A 341-amino-acid polypeptide reads, in one-letter code: MAGKDRKTIEKNYPGAEVDEGGRFKPLPPADDDAKLLVCEYPSLGVIRLDYDYPPALGDIDHPGSFYYDVFYRVVPGLTFGMCQKGEMPDEIKQRFIDAIKWLDAQGVAGITSDCGFFMNFQDLARTVTDKPVFMSSLCQLPAVVCAYAAHEHIALFTANGESLKPMRDLIKKECGVDPEESRFIIVGCQDVPGFEAVANGDRVDVDSVMPHIVRLAKETVAKYADTAKPIRAILFECTELPPYSDAVRAATRLPVFDAITSCNSFLAALMDNPRFGVNNWHLSWDGSQTDYRYGDNLSADLKAKLVNAEHAENVAAAERKLAKDRQKPKPATGTGTAFDA.

2 stretches are compositionally biased toward basic and acidic residues: residues 1–10 and 319–328; these read MAGKDRKTIE and ERKLAKDRQK. Disordered stretches follow at residues 1–24 and 319–341; these read MAGK…GGRF and ERKL…AFDA.

Belongs to the aspartate/glutamate racemases family. ALMA1 subfamily. In terms of assembly, homotetramer.

The enzyme catalyses S,S-dimethyl-beta-propiothetin = acrylate + dimethyl sulfide + H(+). Functionally, mediates cleavage of dimethylsulfoniopropionate (DMSP) into dimethyl sulfide (DMS) and acrylate. DMS is the principal form by which sulfur is transported from oceans to the atmosphere and is a key component of the ocean sulfur cycle. The chain is Dimethylsulfoniopropionate lyase 7 from Emiliania huxleyi (strain CCMP1516).